The primary structure comprises 487 residues: NADH-quinone oxidoreductase subunit N (487 aa).

13 consecutive transmembrane segments (helical) span residues 7–27, 37–57, 81–101, 112–132, 166–186, 207–227, 237–257, 276–296, 307–327, 329–349, 373–393, 407–427, and 452–472; these read LTLI…ILIT, LVSI…APAL, FAKI…PAFF, PVLV…GDLI, FVLG…VYGF, ALFG…AVPF, GAPT…AVAL, IVIF…IGQT, INNV…GLSA, LTYL…LLML, LAWC…LLGF, DMVL…FYYI, and VLLI…TGWL.

The protein belongs to the complex I subunit 2 family. As to quaternary structure, NDH-1 is composed of 14 different subunits. Subunits NuoA, H, J, K, L, M, N constitute the membrane sector of the complex.

Its subcellular location is the cell inner membrane. The catalysed reaction is a quinone + NADH + 5 H(+)(in) = a quinol + NAD(+) + 4 H(+)(out). Its function is as follows. NDH-1 shuttles electrons from NADH, via FMN and iron-sulfur (Fe-S) centers, to quinones in the respiratory chain. The immediate electron acceptor for the enzyme in this species is believed to be ubiquinone. Couples the redox reaction to proton translocation (for every two electrons transferred, four hydrogen ions are translocated across the cytoplasmic membrane), and thus conserves the redox energy in a proton gradient. In Erythrobacter litoralis (strain HTCC2594), this protein is NADH-quinone oxidoreductase subunit N.